The chain runs to 555 residues: CTP synthase (555 aa).

An amidoligase domain region spans residues 1-271; the sequence is MVKRGKKTKY…DDKLAELFNI (271 aa). Ser-19 is a CTP binding site. Residue Ser-19 participates in UTP binding. ATP contacts are provided by residues 20–25 and Asp-77; that span reads SLGKGL. Positions 77 and 145 each coordinate Mg(2+). Residues 152-154, 192-197, and Lys-228 contribute to the CTP site; these read DIE and KTKPTQ. UTP is bound by residues 192–197 and Lys-228; that span reads KTKPTQ. Positions 297-538 constitute a Glutamine amidotransferase type-1 domain; sequence RVGVVGKYVE…VHAAREQRDQ (242 aa). An L-glutamine-binding site is contributed by Gly-358. The active-site Nucleophile; for glutamine hydrolysis is the Cys-385. Residues 386–389, Glu-409, and Arg-466 contribute to the L-glutamine site; that span reads LGLQ. Catalysis depends on residues His-511 and Glu-513.

The protein belongs to the CTP synthase family. In terms of assembly, homotetramer.

It catalyses the reaction UTP + L-glutamine + ATP + H2O = CTP + L-glutamate + ADP + phosphate + 2 H(+). It carries out the reaction L-glutamine + H2O = L-glutamate + NH4(+). The enzyme catalyses UTP + NH4(+) + ATP = CTP + ADP + phosphate + 2 H(+). The protein operates within pyrimidine metabolism; CTP biosynthesis via de novo pathway; CTP from UDP: step 2/2. Allosterically activated by GTP, when glutamine is the substrate; GTP has no effect on the reaction when ammonia is the substrate. The allosteric effector GTP functions by stabilizing the protein conformation that binds the tetrahedral intermediate(s) formed during glutamine hydrolysis. Inhibited by the product CTP, via allosteric rather than competitive inhibition. Its function is as follows. Catalyzes the ATP-dependent amination of UTP to CTP with either L-glutamine or ammonia as the source of nitrogen. Regulates intracellular CTP levels through interactions with the four ribonucleotide triphosphates. In Anaeromyxobacter sp. (strain Fw109-5), this protein is CTP synthase.